Consider the following 208-residue polypeptide: N-(5'-phosphoribosyl)anthranilate isomerase (208 aa).

Belongs to the TrpF family.

The catalysed reaction is N-(5-phospho-beta-D-ribosyl)anthranilate = 1-(2-carboxyphenylamino)-1-deoxy-D-ribulose 5-phosphate. Its pathway is amino-acid biosynthesis; L-tryptophan biosynthesis; L-tryptophan from chorismate: step 3/5. This is N-(5'-phosphoribosyl)anthranilate isomerase from Methanococcus vannielii (strain ATCC 35089 / DSM 1224 / JCM 13029 / OCM 148 / SB).